We begin with the raw amino-acid sequence, 155 residues long: cAMP-dependent protein kinase type II-alpha regulatory subunit (155 aa).

The tract at residues 1–34 (SGSQDLEPSSGLVTDAIADSESEDDEDLDVPIPS) is disordered. Residues 1 to 81 (SGSQDLEPSS…LQEACKDILL (81 aa)) form a dimerization and phosphorylation region. A compositionally biased stretch (acidic residues) spans 18 to 29 (ADSESEDDEDLD). Residues serine 20 and serine 22 each carry the phosphoserine modification. At serine 41 the chain carries Phosphoserine; by PKA. Residues 82 to 155 (FKNL…ALMY) and glutamate 150 each bind 3',5'-cyclic AMP.

Belongs to the cAMP-dependent kinase regulatory chain family. The inactive form of the enzyme is composed of two regulatory chains and two catalytic chains. Activation by cAMP produces two active catalytic monomers and a regulatory dimer that binds four cAMP molecules. Interacts with AKAP4 and CBFA2T3. Interacts with the phosphorylated form of PJA2. Interacts with MYRIP; this interaction may link PKA to components of the exocytosis machinery, thus facilitating exocytosis, including insulin release. Forms a complex composed of PRKAR2A, GSK3B and GSKIP through GSKIP interaction; facilitates PKA-induced phosphorylation and regulates GSK3B activity. Interacts with ADCY8; inhibits adenylate cyclase activity through PKA phosphorylation. Post-translationally, phosphorylated by the activated catalytic chain. As to expression, four types of regulatory chains are found: I-alpha, I-beta, II-alpha, and II-beta. Their expression varies among tissues and is in some cases constitutive and in others inducible.

It is found in the cytoplasm. The protein resides in the cell membrane. Regulatory subunit of the cAMP-dependent protein kinases involved in cAMP signaling in cells. Type II regulatory chains mediate membrane association by binding to anchoring proteins, including the MAP2 kinase. The chain is cAMP-dependent protein kinase type II-alpha regulatory subunit (PRKAR2A) from Sus scrofa (Pig).